We begin with the raw amino-acid sequence, 193 residues long: MGSQWSRDKVYLRAKHEGFRSRASYKLIEIQEKFAVIRRDDNIIDLGAAPGSWLQVLRTLTDGRVLGIDLNPIADIEGIETLEGDLTDPVVQKQAKEMLGTVCIVVCDAAPKLSGHKSYDQARAIALGEEALLFACNVLKPGGNFVIKSFQGADFPELLAAIQGQFYAVKTYSTKATRKGSTEIYIIAKNFKG.

S-adenosyl-L-methionine is bound by residues Gly51, Trp53, Asp69, Asp85, and Asp108. The Proton acceptor role is filled by Lys148.

The protein belongs to the class I-like SAM-binding methyltransferase superfamily. RNA methyltransferase RlmE family.

The protein resides in the cytoplasm. The enzyme catalyses uridine(2552) in 23S rRNA + S-adenosyl-L-methionine = 2'-O-methyluridine(2552) in 23S rRNA + S-adenosyl-L-homocysteine + H(+). In terms of biological role, specifically methylates the uridine in position 2552 of 23S rRNA at the 2'-O position of the ribose in the fully assembled 50S ribosomal subunit. The polypeptide is Ribosomal RNA large subunit methyltransferase E (Methanoregula boonei (strain DSM 21154 / JCM 14090 / 6A8)).